Here is a 188-residue protein sequence, read N- to C-terminus: F-box only protein 36 (188 aa).

The F-box domain maps to 91 to 137 (FDFLERLSDDLLLTIISYLDLEDIARLCQTSHRFAKLCMSDKLWEQI).

In terms of assembly, directly interacts with SKP1 and CUL1.

Its function is as follows. Substrate-recognition component of the SCF (SKP1-CUL1-F-box protein)-type E3 ubiquitin ligase complex. The sequence is that of F-box only protein 36 (FBXO36) from Homo sapiens (Human).